We begin with the raw amino-acid sequence, 602 residues long: Elongation factor 4 (602 aa).

The tr-type G domain maps to 7–189 (KYIRNFSIVA…AIVNKVPAPD (183 aa)). GTP contacts are provided by residues 19 to 24 (DHGKST) and 136 to 139 (NKID).

Belongs to the TRAFAC class translation factor GTPase superfamily. Classic translation factor GTPase family. LepA subfamily.

The protein resides in the cell membrane. The catalysed reaction is GTP + H2O = GDP + phosphate + H(+). Functionally, required for accurate and efficient protein synthesis under certain stress conditions. May act as a fidelity factor of the translation reaction, by catalyzing a one-codon backward translocation of tRNAs on improperly translocated ribosomes. Back-translocation proceeds from a post-translocation (POST) complex to a pre-translocation (PRE) complex, thus giving elongation factor G a second chance to translocate the tRNAs correctly. Binds to ribosomes in a GTP-dependent manner. This chain is Elongation factor 4, found in Clostridium botulinum (strain Kyoto / Type A2).